The chain runs to 207 residues: Small ribosomal subunit protein uS10m (207 aa).

Residues 1-24 constitute a mitochondrion transit peptide; the sequence is MLSVFGLRTVARCNSTLASGGARA.

It belongs to the universal ribosomal protein uS10 family. As to quaternary structure, part of the mitochondrial small ribosomal subunit.

The protein resides in the mitochondrion. Involved in mitochondrial genome encoded proteins translation. Involved in the binding of tRNA to the ribosomes. The sequence is that of Small ribosomal subunit protein uS10m (RSM10) from Eremothecium gossypii (strain ATCC 10895 / CBS 109.51 / FGSC 9923 / NRRL Y-1056) (Yeast).